The primary structure comprises 186 residues: Crossover junction endodeoxyribonuclease RuvC (186 aa).

Active-site residues include aspartate 7, glutamate 73, and aspartate 145. Mg(2+) contacts are provided by aspartate 7, glutamate 73, and aspartate 145.

Belongs to the RuvC family. As to quaternary structure, homodimer which binds Holliday junction (HJ) DNA. The HJ becomes 2-fold symmetrical on binding to RuvC with unstacked arms; it has a different conformation from HJ DNA in complex with RuvA. In the full resolvosome a probable DNA-RuvA(4)-RuvB(12)-RuvC(2) complex forms which resolves the HJ. Mg(2+) serves as cofactor.

The protein localises to the cytoplasm. It carries out the reaction Endonucleolytic cleavage at a junction such as a reciprocal single-stranded crossover between two homologous DNA duplexes (Holliday junction).. Its function is as follows. The RuvA-RuvB-RuvC complex processes Holliday junction (HJ) DNA during genetic recombination and DNA repair. Endonuclease that resolves HJ intermediates. Cleaves cruciform DNA by making single-stranded nicks across the HJ at symmetrical positions within the homologous arms, yielding a 5'-phosphate and a 3'-hydroxyl group; requires a central core of homology in the junction. The consensus cleavage sequence is 5'-(A/T)TT(C/G)-3'. Cleavage occurs on the 3'-side of the TT dinucleotide at the point of strand exchange. HJ branch migration catalyzed by RuvA-RuvB allows RuvC to scan DNA until it finds its consensus sequence, where it cleaves and resolves the cruciform DNA. This Acidovorax sp. (strain JS42) protein is Crossover junction endodeoxyribonuclease RuvC.